Consider the following 681-residue polypeptide: PWWP domain-containing DNA repair factor 3B (681 aa).

The segment covering 102–121 has biased composition (polar residues); the sequence is NLSQESMSEEQPTATASENV. 3 disordered regions span residues 102-144, 166-200, and 285-304; these read NLSQ…TQED, HTTG…DDKK, and QNQS…AGCS. S128 bears the Phosphoserine mark. Over residues 285–302 the composition is skewed to polar residues; sequence QNQSSVESDVGAETSTAG. One can recognise a PWWP domain in the interval 377–438; the sequence is TGMIVWFKYQ…KKYDCKEKQA (62 aa).

This sequence belongs to the PWWP3A family.

This is PWWP domain-containing DNA repair factor 3B (Pwwp3b) from Mus musculus (Mouse).